A 247-amino-acid chain; its full sequence is Adenosylcobinamide-GDP ribazoletransferase (247 aa).

5 consecutive transmembrane segments (helical) span residues 34-54 (IITF…VFMV), 59-79 (CGVP…TGGF), 113-133 (GGLA…ELAL), 138-158 (ILAS…LLMY), and 194-214 (VLLP…AIFI).

The protein belongs to the CobS family. Mg(2+) is required as a cofactor.

Its subcellular location is the cell inner membrane. It carries out the reaction alpha-ribazole + adenosylcob(III)inamide-GDP = adenosylcob(III)alamin + GMP + H(+). The catalysed reaction is alpha-ribazole 5'-phosphate + adenosylcob(III)inamide-GDP = adenosylcob(III)alamin 5'-phosphate + GMP + H(+). Its pathway is cofactor biosynthesis; adenosylcobalamin biosynthesis; adenosylcobalamin from cob(II)yrinate a,c-diamide: step 7/7. Functionally, joins adenosylcobinamide-GDP and alpha-ribazole to generate adenosylcobalamin (Ado-cobalamin). Also synthesizes adenosylcobalamin 5'-phosphate from adenosylcobinamide-GDP and alpha-ribazole 5'-phosphate. The sequence is that of Adenosylcobinamide-GDP ribazoletransferase from Shigella dysenteriae serotype 1 (strain Sd197).